Here is a 62-residue protein sequence, read N- to C-terminus: MAKGESERIVLEVEPELKKALYSVLAMEQKTLKDWFVDKAQEHICEKKSELIERFSKVDNEI.

This is an uncharacterized protein from Escherichia coli.